A 295-amino-acid polypeptide reads, in one-letter code: Acetaldehyde dehydrogenase (295 aa).

Residue serine 11 to isoleucine 14 coordinates NAD(+). Cysteine 127 (acyl-thioester intermediate) is an active-site residue. NAD(+) is bound by residues serine 158–asparagine 166 and asparagine 270.

This sequence belongs to the acetaldehyde dehydrogenase family.

The catalysed reaction is acetaldehyde + NAD(+) + CoA = acetyl-CoA + NADH + H(+). The chain is Acetaldehyde dehydrogenase (nbaJ) from Geobacillus thermodenitrificans (strain NG80-2).